The primary structure comprises 280 residues: uncharacterized protein (280 aa).

CBS domains are found at residues 10-67 (QNKK…GSKY), 90-146 (MEEN…KIDE), 154-209 (ITRD…DWAF), and 229-280 (MKRD…KYFA).

This is an uncharacterized protein from Methanocaldococcus jannaschii (strain ATCC 43067 / DSM 2661 / JAL-1 / JCM 10045 / NBRC 100440) (Methanococcus jannaschii).